We begin with the raw amino-acid sequence, 591 residues long: Probable lysosomal cobalamin transporter (591 aa).

5 consecutive transmembrane segments (helical) span residues leucine 8–valine 28, alanine 39–isoleucine 59, isoleucine 95–threonine 115, tryptophan 144–phenylalanine 164, and phenylalanine 198–leucine 218. The segment at threonine 238–arginine 266 is disordered. Residues threonine 244–arginine 266 show a composition bias toward basic and acidic residues. A run of 4 helical transmembrane segments spans residues leucine 315 to threonine 335, valine 378 to alanine 398, methionine 422 to valine 442, and phenylalanine 509 to phenylalanine 529.

The protein belongs to the LIMR family. LMBRD1 subfamily.

It localises to the lysosome membrane. In terms of biological role, probable lysosomal cobalamin transporter. Required to export cobalamin from lysosomes allowing its conversion to cofactors. The protein is Probable lysosomal cobalamin transporter of Pyrenophora tritici-repentis (strain Pt-1C-BFP) (Wheat tan spot fungus).